We begin with the raw amino-acid sequence, 710 residues long: Integrator complex subunit 10 (710 aa).

Phosphoserine occurs at positions 231, 381, and 382. Residue lysine 464 forms a Glycyl lysine isopeptide (Lys-Gly) (interchain with G-Cter in SUMO2) linkage.

The protein belongs to the Integrator subunit 10 family. In terms of assembly, component of the Integrator complex, composed of core subunits INTS1, INTS2, INTS3, INTS4, INTS5, INTS6, INTS7, INTS8, INTS9/RC74, INTS10, INTS11/CPSF3L, INTS12, INTS13, INTS14 and INTS15. The core complex associates with protein phosphatase 2A subunits PPP2CA and PPP2R1A, to form the Integrator-PP2A (INTAC) complex. INTS10 is part of the tail subcomplex, composed of INTS10, INTS13, INTS14 and INTS15.

It is found in the nucleus. Component of the integrator complex, a multiprotein complex that terminates RNA polymerase II (Pol II) transcription in the promoter-proximal region of genes. The integrator complex provides a quality checkpoint during transcription elongation by driving premature transcription termination of transcripts that are unfavorably configured for transcriptional elongation: the complex terminates transcription by (1) catalyzing dephosphorylation of the C-terminal domain (CTD) of Pol II subunit POLR2A/RPB1 and SUPT5H/SPT5, (2) degrading the exiting nascent RNA transcript via endonuclease activity and (3) promoting the release of Pol II from bound DNA. The integrator complex is also involved in terminating the synthesis of non-coding Pol II transcripts, such as enhancer RNAs (eRNAs), small nuclear RNAs (snRNAs), telomerase RNAs and long non-coding RNAs (lncRNAs). Within the integrator complex, INTS10 is part of the integrator tail module that acts as a platform for the recruitment of transcription factors at promoters. May be not involved in the recruitment of cytoplasmic dynein to the nuclear envelope, probably as component of the integrator complex. This Homo sapiens (Human) protein is Integrator complex subunit 10.